The primary structure comprises 408 residues: Centromere protein U (408 aa).

The span at 1 to 33 (DRPRPARLSHARFSKNHSGRTHSMKDKAGRKHR) shows a compositional bias: basic residues. The interval 1–218 (DRPRPARLSH…GKRKKPRSYT (218 aa)) is disordered. Threonine 72 carries the phosphothreonine; by PLK1 modification. Threonine 92 is subject to Phosphothreonine. Positions 94–103 (QEKEAKRSSD) are enriched in basic and acidic residues. Phosphoserine is present on serine 102. The residue at position 104 (threonine 104) is a Phosphothreonine. Residues serine 105, serine 110, and serine 114 each carry the phosphoserine modification. The span at 118 to 127 (SAKKPRRKLK) shows a compositional bias: basic residues. Residues serine 130, serine 133, and serine 135 each carry the phosphoserine modification. Polar residues predominate over residues 176–186 (PQKTGPQSAES). Residue lysine 178 forms a Glycyl lysine isopeptide (Lys-Gly) (interchain with G-Cter in SUMO2) linkage. Phosphoserine occurs at positions 183 and 187. Threonine 192 is modified (phosphothreonine). Serine 222 is subject to Phosphoserine. Positions 273-350 (SNLKEELIKM…LRKAAYFLSN (78 aa)) form a coiled coil. Residues 293-310 (KRKNAKIISNIEKKRQRL) carry the Nuclear localization signal motif.

The protein belongs to the CENP-U/AME1 family. As to quaternary structure, component of the CENPA-NAC complex, at least composed of CENPA, CENPC, CENPH, CENPM, CENPN, CENPT and CENPU. The CENPA-NAC complex interacts with the CENPA-CAD complex, composed of CENPI, CENPK, CENPL, CENPO, CENPP, CENPQ, CENPR and CENPS. Interacts with MLF1. In terms of processing, phosphorylated by PLK1 at Thr-72, creating a self-tethering site that specifically interacts with the polo-box domain of PLK1.

The protein localises to the cytoplasm. The protein resides in the nucleus. It is found in the chromosome. It localises to the centromere. Its subcellular location is the kinetochore. Functionally, component of the CENPA-NAC (nucleosome-associated) complex, a complex that plays a central role in assembly of kinetochore proteins, mitotic progression and chromosome segregation. The CENPA-NAC complex recruits the CENPA-CAD (nucleosome distal) complex and may be involved in incorporation of newly synthesized CENPA into centromeres. Plays an important role in the correct PLK1 localization to the mitotic kinetochores. A scaffold protein responsible for the initial recruitment and maintenance of the kinetochore PLK1 population until its degradation. Involved in transcriptional repression. The sequence is that of Centromere protein U (CENPU) from Bos taurus (Bovine).